We begin with the raw amino-acid sequence, 457 residues long: MTTNNKQRQTWSSRLTYVMTVAGATVGFGATWRFPYLVGENGGGAYVLLFCIAMIVIGIPMILVENVIGRRLRVNSIDAFGDKILDKGKGISKYWKILGYMGLLGAFGIMAYYMVLGGWVISYIISLISGTLDISTPITKDIAKNFYDLHIGNSPYEIIFYTLLFVIVNYIILAKGIIGGIERSVKYLMPLLFIFLIGMVIRNVTLPGAMEGITFYLKPDFSKITPQLFIFVLGQVFFALSLGFGVLITLSSYLNKEENLIHTAVITGFTNTIIAVLAGFMIFPSLFTFGIEPNAGPTLVFQSLPIVFSHLWAGKFFAIIFFGLLLIAALTTSITIYEVIITALQEKLRMCRGKAIVLTLSGIFLLGNIPAILGDNLWKNVTIFGKSIFDFYDYASGNILFMLTALGCAIFVGFVLKDEAKKELSSTKYSTFIKIWFNYVKFVVPLIILVIFISNLF.

Helical transmembrane passes span 18-38 (VMTV…PYLV), 44-64 (GAYV…MILV), 101-121 (MGLL…GWVI), 158-178 (IIFY…KGII), 188-208 (LMPL…TLPG), 228-248 (LFIF…GVLI), 273-293 (IIAV…GIEP), 294-314 (NAGP…LWAG), 316-336 (FFAI…SITI), 355-375 (AIVL…ILGD), 396-416 (SGNI…GFVL), and 433-453 (IKIW…VIFI).

This sequence belongs to the sodium:neurotransmitter symporter (SNF) (TC 2.A.22) family.

The protein localises to the cell membrane. Putative sodium-dependent transporter. This is an uncharacterized protein from Haemophilus influenzae (strain ATCC 51907 / DSM 11121 / KW20 / Rd).